The sequence spans 330 residues: Peroxidase 70 (330 aa).

Residues 1-24 (MRSFTNLNPCYVLLPFFLVLATNA) form the signal peptide. 4 cysteine pairs are disulfide-bonded: Cys43-Cys119, Cys76-Cys81, Cys125-Cys326, and Cys202-Cys234. His74 functions as the Proton acceptor in the catalytic mechanism. Positions 75, 78, 80, 82, and 84 each coordinate Ca(2+). Pro165 provides a ligand contact to substrate. Position 195 (His195) interacts with heme b. Thr196 serves as a coordination point for Ca(2+). Ca(2+) contacts are provided by Asp247, Ser250, and Asp255.

This sequence belongs to the peroxidase family. Classical plant (class III) peroxidase subfamily. Heme b serves as cofactor. Requires Ca(2+) as cofactor.

The protein localises to the secreted. It catalyses the reaction 2 a phenolic donor + H2O2 = 2 a phenolic radical donor + 2 H2O. Removal of H(2)O(2), oxidation of toxic reductants, biosynthesis and degradation of lignin, suberization, auxin catabolism, response to environmental stresses such as wounding, pathogen attack and oxidative stress. These functions might be dependent on each isozyme/isoform in each plant tissue. The polypeptide is Peroxidase 70 (PER70) (Arabidopsis thaliana (Mouse-ear cress)).